The primary structure comprises 413 residues: Alpha-1-antitrypsin-like protein GS55-MS (413 aa).

Positions 1 to 24 (MPSSISWGLLLLAGLSCLVAGSLA) are cleaved as a signal peptide. N-linked (GlcNAc...) asparagine glycans are attached at residues asparagine 65, asparagine 102, and asparagine 266. The RCL stretch occupies residues 368-387 (GATFLEMMPMSLPPEVKFDK).

The protein belongs to the serpin family.

Its subcellular location is the secreted. Functionally, inhibitor of serine proteases. Its primary target is elastase, but it also has a moderate affinity for plasmin and thrombin. This Ictidomys tridecemlineatus (Thirteen-lined ground squirrel) protein is Alpha-1-antitrypsin-like protein GS55-MS.